Consider the following 381-residue polypeptide: Endophilin-A homolog (381 aa).

The membrane-binding amphipathic helix stretch occupies residues methionine 1 to methionine 21. The 230-residue stretch at serine 18–alanine 247 folds into the BAR domain. A coiled-coil region spans residues cysteine 170–leucine 238. The segment at alanine 246–proline 323 is disordered. The span at alanine 260–arginine 271 shows a compositional bias: polar residues. A compositionally biased stretch (pro residues) spans tyrosine 305–leucine 317. The SH3 domain occupies glutamine 320–proline 379.

The protein belongs to the endophilin family. As to quaternary structure, may form a homodimer (via the BAR domain). As to expression, expressed in neurons and posterior intestine.

Its subcellular location is the synapse. The protein resides in the cytoplasmic vesicle. It localises to the secretory vesicle. It is found in the synaptic vesicle. The protein localises to the membrane. In terms of biological role, involved in synaptic vesicle (SV) recycling in neurons probably by regulating clathrin-mediated endocytosis. By controlling SV endocytosis, regulates the rate of excitatory postsynaptic currents (EPSCs) at neuromuscular junctions and thus locomotion. In a similar manner, involved in necrotic neuronal cell death induced by abnormal hyperactivation of ion channels. Plays a minor role in responses to mechanical stimuli. Plays a minor role in unc-26/synaptojanin localization to synapses. This is Endophilin-A homolog from Caenorhabditis elegans.